A 64-amino-acid polypeptide reads, in one-letter code: Alpha-mammal toxin Lqq5 (64 aa).

Positions 2–64 (KDGYIVDDKN…VSIKEKGRCN (63 aa)) constitute an LCN-type CS-alpha/beta domain. 4 cysteine pairs are disulfide-bonded: Cys-12–Cys-63, Cys-16–Cys-36, Cys-22–Cys-46, and Cys-26–Cys-48. Asn-64 is modified (asparagine amide).

The protein belongs to the long (4 C-C) scorpion toxin superfamily. Sodium channel inhibitor family. Alpha subfamily. Expressed by the venom gland.

The protein localises to the secreted. Functionally, alpha toxins bind voltage-independently at site-3 of sodium channels (Nav) and inhibit the inactivation of the activated channels, thereby blocking neuronal transmission. Is active on mammals and bind with high affinity to rat brain synaptosome. Does not display phospholipid-binding activity. The sequence is that of Alpha-mammal toxin Lqq5 from Leiurus quinquestriatus quinquestriatus (Egyptian scorpion).